The following is a 138-amino-acid chain: Large ribosomal subunit protein uL16 (138 aa).

Residues 1-17 are compositionally biased toward basic residues; sequence MLIPRRVKHRKQHHPTR. Positions 1–24 are disordered; it reads MLIPRRVKHRKQHHPTRRGAASGG.

It belongs to the universal ribosomal protein uL16 family. In terms of assembly, part of the 50S ribosomal subunit.

Binds 23S rRNA and is also seen to make contacts with the A and possibly P site tRNAs. In Kineococcus radiotolerans (strain ATCC BAA-149 / DSM 14245 / SRS30216), this protein is Large ribosomal subunit protein uL16.